The primary structure comprises 72 residues: Beta-defensin 104 (72 aa).

The signal sequence occupies residues 1–22 (MQRLVLLLAISLLLYQDLPVRS). Disulfide bonds link Cys-30–Cys-57, Cys-37–Cys-51, and Cys-41–Cys-58.

Belongs to the beta-defensin family. High expression in the testis. Gastric antrum exhibited relatively high levels. A lower expression is observed in uterus and neutrophils thyroid gland, lung, and kidney. No detectable expression in other tissues tested.

The protein localises to the secreted. Has antimicrobial activity. Synergistic effects with lysozyme and DEFB103. The sequence is that of Beta-defensin 104 (DEFB104A) from Homo sapiens (Human).